The primary structure comprises 223 residues: Type II restriction enzyme BglII (223 aa).

Mg(2+) contacts are provided by Asp-84 and Val-94.

As to quaternary structure, homodimer. The cofactor is Mg(2+).

The catalysed reaction is Endonucleolytic cleavage of DNA to give specific double-stranded fragments with terminal 5'-phosphates.. Functionally, a P subtype restriction enzyme that recognizes the double-stranded sequence 5'-AGATCT-3' and cleaves after A-1. In Bacillus subtilis, this protein is Type II restriction enzyme BglII (bglIIR).